Consider the following 130-residue polypeptide: T-cell receptor beta chain V region A20.2.25 (130 aa).

The signal sequence occupies residues 1 to 21; the sequence is MSCRLLLYVSLCLVETALMNT. Residues 22 to 112 are v segment; that stretch reads KITQSPRYLI…DSAVYFCASS (91 aa). N-linked (GlcNAc...) asparagine glycans are attached at residues N36 and N75. The segment at 113 to 115 is d segment; that stretch reads HGE. The segment at 116–130 is j segment; the sequence is NTEVFFGKGTTLTVV.

The protein is T-cell receptor beta chain V region A20.2.25 of Mus musculus (Mouse).